The chain runs to 745 residues: Serine/threonine-protein kinase BUR1 (745 aa).

Residues 1–21 (MSVIAGHHVPRSNDQRQYDTP) form a disordered region. Residues 44–349 (YEVIEKLGQG…ALDALNHKFF (306 aa)) enclose the Protein kinase domain. Residues 50 to 58 (LGQGTFGVV) and lysine 73 contribute to the ATP site. The active-site Proton acceptor is aspartate 179. Composition is skewed to basic and acidic residues over residues 380-406 (DKEQ…RYNA), 428-475 (DYID…DIQN), and 493-508 (KLRE…KKYD). Residues 380–701 (DKEQAVSELK…EVSDLEEDSD (322 aa)) form a disordered region. Low complexity predominate over residues 516–534 (SRGSKSPSPSKLSSISQSK). Basic and acidic residues predominate over residues 547 to 557 (ASRESSLERKQ). Polar residues-rich tracts occupy residues 558 to 567 (VSNGIRTTTD) and 586 to 598 (LTSN…PTRN). Basic and acidic residues predominate over residues 599–631 (KSVERPKDLEKPTNGVTEDRNKKPVLEEKKEVV). Low complexity predominate over residues 632 to 660 (KPNLAIPKIKKSSSLVSLSSRSSTTPVIS). Positions 661 to 674 (NPSKVTKRAASSVT) are enriched in polar residues. Residues 692-701 (EVSDLEEDSD) are compositionally biased toward acidic residues.

Belongs to the protein kinase superfamily. CMGC Ser/Thr protein kinase family. CDC2/CDKX subfamily.

The protein resides in the nucleus. The enzyme catalyses L-seryl-[protein] + ATP = O-phospho-L-seryl-[protein] + ADP + H(+). It carries out the reaction L-threonyl-[protein] + ATP = O-phospho-L-threonyl-[protein] + ADP + H(+). The catalysed reaction is [DNA-directed RNA polymerase] + ATP = phospho-[DNA-directed RNA polymerase] + ADP + H(+). Serine/threonine-protein kinase involved in transcription regulation. Phosphorylates the UBC2/RAD6 ubiquitin-conjugating enzyme (E2), leading to monoubiquitination of histone H2B and the silencing of telomeric-associated genes. Also required for histone H3 methylation. Necessary for the recovery from pheromone-induced growth arrest in the cell cycle G1 phase. Required for pseudohyphal growth and virulence in mice. In Candida albicans (strain SC5314 / ATCC MYA-2876) (Yeast), this protein is Serine/threonine-protein kinase BUR1 (CRK1).